The sequence spans 43 residues: Protein PsbN (43 aa).

The helical transmembrane segment at T5 to F27 threads the bilayer.

The protein belongs to the PsbN family.

It localises to the plastid. The protein resides in the chloroplast thylakoid membrane. Functionally, may play a role in photosystem I and II biogenesis. The chain is Protein PsbN from Chara vulgaris (Common stonewort).